The following is a 362-amino-acid chain: Type II methyltransferase M.MamI (362 aa).

The protein belongs to the N(4)/N(6)-methyltransferase family.

The catalysed reaction is a 2'-deoxyadenosine in DNA + S-adenosyl-L-methionine = an N(6)-methyl-2'-deoxyadenosine in DNA + S-adenosyl-L-homocysteine + H(+). Its function is as follows. A gamma subtype methylase that recognizes the double-stranded sequence 5'-GATNNNNATC-3', methylates A-? on both strands, and protects the DNA from cleavage by the MamI endonuclease. This is Type II methyltransferase M.MamI from Microbacterium ammoniaphilum.